The chain runs to 518 residues: GMP synthase [glutamine-hydrolyzing] (518 aa).

One can recognise a Glutamine amidotransferase type-1 domain in the interval 6 to 200 (RLLIIDFGSQ…FVKLAGFKGD (195 aa)). C84 (nucleophile) is an active-site residue. Catalysis depends on residues H175 and E177. The GMPS ATP-PPase domain occupies 201–393 (WTMGAYREEA…LGLPDSFIGR (193 aa)). 228 to 234 (SGGVDSS) lines the ATP pocket.

In terms of assembly, homodimer.

The enzyme catalyses XMP + L-glutamine + ATP + H2O = GMP + L-glutamate + AMP + diphosphate + 2 H(+). It functions in the pathway purine metabolism; GMP biosynthesis; GMP from XMP (L-Gln route): step 1/1. In terms of biological role, catalyzes the synthesis of GMP from XMP. This is GMP synthase [glutamine-hydrolyzing] from Cereibacter sphaeroides (strain ATCC 17025 / ATH 2.4.3) (Rhodobacter sphaeroides).